Consider the following 159-residue polypeptide: Ribosomal RNA large subunit methyltransferase H (159 aa).

S-adenosyl-L-methionine is bound by residues leucine 76, glycine 108, and 127–132 (FSPMTF).

The protein belongs to the RNA methyltransferase RlmH family. Homodimer.

The protein localises to the cytoplasm. The enzyme catalyses pseudouridine(1915) in 23S rRNA + S-adenosyl-L-methionine = N(3)-methylpseudouridine(1915) in 23S rRNA + S-adenosyl-L-homocysteine + H(+). Functionally, specifically methylates the pseudouridine at position 1915 (m3Psi1915) in 23S rRNA. The protein is Ribosomal RNA large subunit methyltransferase H of Alkaliphilus metalliredigens (strain QYMF).